The sequence spans 269 residues: Chymotrypsin-like elastase family member 2A (269 aa).

A signal peptide spans 1-16; the sequence is MIRTLLLSTLVAGALS. The propeptide at 17-28 is activation peptide; it reads CGDPTYPPYVTR. The 239-residue stretch at 29 to 267 folds into the Peptidase S1 domain; it reads VVGGEEARPN…YIDWINSVIA (239 aa). An intrachain disulfide couples Cys58 to Cys74. Residues His73 and Asp121 each act as charge relay system in the active site. Cystine bridges form between Cys155–Cys222, Cys186–Cys202, and Cys212–Cys243. The active-site Charge relay system is the Ser216.

This sequence belongs to the peptidase S1 family. Elastase subfamily. Interacts with CPA1. Interacts with SERPINA1. As to expression, expressed in pancreas. Not detected in keratinocytes. Detected in exocrine secretions of the pancreas (at protein level). Also expressed in a small fraction of cells in pancreatic islets, adrenal cortex, intestinal glands and colonic lymphoid follicles (at protein level). Detected in plasma.

Its subcellular location is the secreted. It carries out the reaction Preferential cleavage: Leu-|-Xaa, Met-|-Xaa and Phe-|-Xaa. Hydrolyzes elastin.. In terms of biological role, elastase that enhances insulin signaling and might have a physiologic role in cellular glucose metabolism. Circulates in plasma and reduces platelet hyperactivation, triggers both insulin secretion and degradation, and increases insulin sensitivity. This chain is Chymotrypsin-like elastase family member 2A, found in Homo sapiens (Human).